The following is a 334-amino-acid chain: Zinc finger Ran-binding domain-containing protein 2 (334 aa).

2 RanBP2-type zinc fingers span residues 9-40 and 65-94; these read SDGD…EKTT and SAND…PKYA. The tract at residues 117 to 334 is disordered; that stretch reads REESDGEYDE…SGSRTSSKKK (218 aa). Residues 150–163 show a composition bias toward acidic residues; sequence DKESEGEDEEDEDG. The segment covering 196-212 has biased composition (basic residues); that stretch reads KKKKSNRRSRSKSRSSH. Low complexity-rich tracts occupy residues 213–224 and 258–285; these read SRSSSRSSSHSS and SRSS…SSSP. The span at 302–318 shows a compositional bias: basic residues; it reads RKKRRSRSRSPERRRRS. Over residues 319–334 the composition is skewed to low complexity; the sequence is SSGSSHSGSRTSSKKK.

This sequence belongs to the ZRANB2 family.

It is found in the nucleus. In terms of biological role, may regulate alternative splicing by interfering with constitutive 5'-splice site selection. This is Zinc finger Ran-binding domain-containing protein 2 from Gallus gallus (Chicken).